A 219-amino-acid polypeptide reads, in one-letter code: MKLLNIALDGPAAAGKSTIAKLLAAKLSMIYVDTGAMYRAITYKYLQQNKPEDFDQLIETTELSLTYDKDKGQRVILDNQDVTDYLRENDVTNHVSYVASKEAVRTFSVNKQQELAAKKGIVMDGRDIGTVVLPDADLKVYMIASVEERAVRRQKDNEERGIVSNVEQLKQEIADRDQYDMNRDISPLKKADDAITVDTTGKSIEIVTQEILALVHKIS.

10–18 (GPAAAGKST) contributes to the ATP binding site.

This sequence belongs to the cytidylate kinase family. Type 1 subfamily.

Its subcellular location is the cytoplasm. It catalyses the reaction CMP + ATP = CDP + ADP. The enzyme catalyses dCMP + ATP = dCDP + ADP. The protein is Cytidylate kinase of Staphylococcus saprophyticus subsp. saprophyticus (strain ATCC 15305 / DSM 20229 / NCIMB 8711 / NCTC 7292 / S-41).